Here is a 282-residue protein sequence, read N- to C-terminus: Undecaprenyl-diphosphatase (282 aa).

Helical transmembrane passes span 39-59 (PGAA…LIYF), 85-105 (ATMG…GLLF), 115-135 (SLYW…LTEV), 153-173 (IGWK…IPGS), 196-216 (FSFL…LYET), 230-250 (LLVA…FLIT), and 260-280 (FIIY…TGAI).

Belongs to the UppP family.

The protein localises to the cell inner membrane. It catalyses the reaction di-trans,octa-cis-undecaprenyl diphosphate + H2O = di-trans,octa-cis-undecaprenyl phosphate + phosphate + H(+). Catalyzes the dephosphorylation of undecaprenyl diphosphate (UPP). Confers resistance to bacitracin. This is Undecaprenyl-diphosphatase from Chlorobium chlorochromatii (strain CaD3).